Consider the following 301-residue polypeptide: MTIERDAAANTAKVLSEALPYIRRYVGKTLVIKYGGNAMESEELKTGFARDIVLMKAVGINPVVVHGGGPQIGDLLKRLSIESHFVDGMRVTDAQTMDVVEMVLGGQVNKDIVNLINRHGGSAIGLTGKDAELIRAKKLTVTRQTPEMTTPEIIDIGHVGEVVGINTDLLNLLVKGDFIPVIAPIGVGANGESYNINADLVAGKVAEALKAEKLMLLTNIAGLMDKSGKVLTGLSTQQVDELIADGTIYGGMLPKIRCALEAVQGGVGSSLIIDGRVPNAILLEIFTDTGVGTLISNRKRP.

Substrate contacts are provided by residues 68–69 (GG), arginine 90, and asparagine 195.

It belongs to the acetylglutamate kinase family. ArgB subfamily.

The protein localises to the cytoplasm. The enzyme catalyses N-acetyl-L-glutamate + ATP = N-acetyl-L-glutamyl 5-phosphate + ADP. Its pathway is amino-acid biosynthesis; L-arginine biosynthesis; N(2)-acetyl-L-ornithine from L-glutamate: step 2/4. Catalyzes the ATP-dependent phosphorylation of N-acetyl-L-glutamate. The chain is Acetylglutamate kinase from Pseudomonas fluorescens (strain ATCC BAA-477 / NRRL B-23932 / Pf-5).